A 273-amino-acid polypeptide reads, in one-letter code: Zinc finger protein 80 (273 aa).

2 C2H2-type zinc fingers span residues 49–71 (YKCKECGSVFNKNSLLVRHQQIH) and 77–99 (YECQECGKAFPEKVDFVRPMRIH). Residues 105–127 (CKCVECGKVFNRRSHLLCYRQIH) form a C2H2-type 3; atypical zinc finger. 4 consecutive C2H2-type zinc fingers follow at residues 133–155 (YECSECGKTFSYHSVFIQHRVTH), 161–183 (FGCKECGKTFYYNSSLTRHMKIH), 189–211 (CKCSECGKTFTYRSVFFRHSMTH), and 217–239 (YECKECGKGFYYSYSLTRHTRSH).

The protein belongs to the krueppel C2H2-type zinc-finger protein family.

The protein resides in the nucleus. In terms of biological role, may be involved in transcriptional regulation. The polypeptide is Zinc finger protein 80 (ZNF80) (Homo sapiens (Human)).